The primary structure comprises 167 residues: Piercer of microtubule wall 1 protein (167 aa).

The disordered stretch occupies residues 1–54; that stretch reads MSEEKPQQSAEEPEPGEPKAKPAPEEPEPGEPKAKPAPEEPEPGEPKAKPAPEK. The segment covering 16–54 has biased composition (basic and acidic residues); sequence GEPKAKPAPEEPEPGEPKAKPAPEEPEPGEPKAKPAPEK.

Belongs to the PIERCE1 family. In terms of assembly, microtubule inner protein component of sperm flagellar doublet microtubules. Interacts with CFAP53, ODAD1 and ODAD3; the interactions link the outer dynein arms docking complex (ODA-DC) to the internal microtubule inner proteins (MIP) in cilium axoneme. Expressed in brain, lung, kidney and testis.

It localises to the cytoplasm. It is found in the cytoskeleton. The protein resides in the cilium axoneme. Its subcellular location is the flagellum axoneme. Microtubule inner protein involved in the attachment of outer dynein arms (ODAs) to dynein-decorated doublet microtubules (DMTs) in cilia axoneme. Functions at the initial step of left-right asymmetry specification of the visceral organs. This chain is Piercer of microtubule wall 1 protein, found in Mus musculus (Mouse).